A 637-amino-acid polypeptide reads, in one-letter code: Putative pentatricopeptide repeat-containing protein At5g65820 (637 aa).

12 PPR repeats span residues 146 to 180, 182 to 216, 217 to 247, 251 to 285, 286 to 320, 321 to 355, 356 to 390, 391 to 425, 426 to 460, 461 to 495, 498 to 532, and 534 to 568; these read SIEV…NPQL, EPEL…GFEP, DEYV…MRMR, NLRY…GFEP, DIVD…GFEP, NANC…ECEA, DVVT…GLMP, SELT…EYHP, DIGI…GLSP, GVDT…GLFS, QYGT…GACE, and NVLS…DFMP. Residues 616-630 show a composition bias toward basic and acidic residues; it reads QDLTEKAKSKQDREG. The tract at residues 616–637 is disordered; the sequence is QDLTEKAKSKQDREGKKKQRSR.

This sequence belongs to the PPR family. P subfamily.

The protein is Putative pentatricopeptide repeat-containing protein At5g65820 of Arabidopsis thaliana (Mouse-ear cress).